A 384-amino-acid chain; its full sequence is Carbamoyl phosphate synthase small chain (384 aa).

Residues M1 to Q192 are CPSase. Positions 51, 244, and 246 each coordinate L-glutamine. In terms of domain architecture, Glutamine amidotransferase type-1 spans T196–E381. The active-site Nucleophile is C272. Positions 273, 276, 312, 314, and 315 each coordinate L-glutamine. Active-site residues include H354 and E356.

It belongs to the CarA family. In terms of assembly, composed of two chains; the small (or glutamine) chain promotes the hydrolysis of glutamine to ammonia, which is used by the large (or ammonia) chain to synthesize carbamoyl phosphate. Tetramer of heterodimers (alpha,beta)4.

The enzyme catalyses hydrogencarbonate + L-glutamine + 2 ATP + H2O = carbamoyl phosphate + L-glutamate + 2 ADP + phosphate + 2 H(+). The catalysed reaction is L-glutamine + H2O = L-glutamate + NH4(+). It participates in amino-acid biosynthesis; L-arginine biosynthesis; carbamoyl phosphate from bicarbonate: step 1/1. It functions in the pathway pyrimidine metabolism; UMP biosynthesis via de novo pathway; (S)-dihydroorotate from bicarbonate: step 1/3. In terms of biological role, small subunit of the glutamine-dependent carbamoyl phosphate synthetase (CPSase). CPSase catalyzes the formation of carbamoyl phosphate from the ammonia moiety of glutamine, carbonate, and phosphate donated by ATP, constituting the first step of 2 biosynthetic pathways, one leading to arginine and/or urea and the other to pyrimidine nucleotides. The small subunit (glutamine amidotransferase) binds and cleaves glutamine to supply the large subunit with the substrate ammonia. In Synechocystis sp. (strain ATCC 27184 / PCC 6803 / Kazusa), this protein is Carbamoyl phosphate synthase small chain.